Here is a 257-residue protein sequence, read N- to C-terminus: DNA repair protein RecO (257 aa).

Belongs to the RecO family.

In terms of biological role, involved in DNA repair and RecF pathway recombination. The sequence is that of DNA repair protein RecO from Streptococcus sanguinis (strain SK36).